The sequence spans 273 residues: Manganese catalase (273 aa).

Glu-35 is a Mn(2+) binding site. Residues Asp-57 and Asp-61 each coordinate Ca(2+). The Mn(2+) site is built by Glu-66, His-69, Glu-149, and His-182. Ca(2+) contacts are provided by Asn-220, Ser-222, and Gly-224. Positions 254-273 (EKPELKPAPPFVHNTLPGRE) are disordered.

Belongs to the manganese catalase family. The cofactor is Ca(2+). Mn(2+) is required as a cofactor.

It catalyses the reaction 2 H2O2 = O2 + 2 H2O. Its function is as follows. Catalyzes the decomposition of hydrogen peroxide into water and oxygen. The polypeptide is Manganese catalase (ydbD) (Bacillus subtilis (strain 168)).